Here is an 87-residue protein sequence, read N- to C-terminus: Small ribosomal subunit protein uS15c (87 aa).

It belongs to the universal ribosomal protein uS15 family. In terms of assembly, part of the 30S ribosomal subunit.

The protein localises to the plastid. The protein resides in the chloroplast. The polypeptide is Small ribosomal subunit protein uS15c (rps15) (Atropa belladonna (Belladonna)).